The primary structure comprises 256 residues: Type III pantothenate kinase (256 aa).

Residue 6 to 13 (DVGNTNMV) participates in ATP binding. Substrate contacts are provided by residues Tyr-100 and 107–110 (GADR). Asp-109 functions as the Proton acceptor in the catalytic mechanism. Asp-129 contributes to the K(+) binding site. Thr-132 is an ATP binding site. Position 184 (Thr-184) interacts with substrate.

It belongs to the type III pantothenate kinase family. Homodimer. It depends on NH4(+) as a cofactor. K(+) is required as a cofactor.

It localises to the cytoplasm. The enzyme catalyses (R)-pantothenate + ATP = (R)-4'-phosphopantothenate + ADP + H(+). It participates in cofactor biosynthesis; coenzyme A biosynthesis; CoA from (R)-pantothenate: step 1/5. Catalyzes the phosphorylation of pantothenate (Pan), the first step in CoA biosynthesis. This chain is Type III pantothenate kinase, found in Clostridioides difficile (strain 630) (Peptoclostridium difficile).